The following is a 1235-amino-acid chain: Major DNA-binding protein (1235 aa).

The tract at residues 536–584 is disordered; that stretch reads GGLDGKGDDGVPGGGAGGGGGRDVSGGPSDGLGGGRGGGGGGDSGGMMG. The span at 545–584 shows a compositional bias: gly residues; sequence GVPGGGAGGGGGRDVSGGPSDGLGGGRGGGGGGDSGGMMG. Residues 846–847 carry the Required for filament formation motif; it reads FW. Over residues 1214–1226 the composition is skewed to gly residues; the sequence is GVGGSSGGGGGSG. Residues 1214–1235 are disordered; the sequence is GVGGSSGGGGGSGLLPAKRSRL. A required for nuclear localization region spans residues 1232–1235; it reads RSRL.

It belongs to the herpesviridae major DNA-binding protein family. As to quaternary structure, homooligomers. Forms double-helical filaments necessary for the formation of replication compartments within the host nucleus. Interacts with the origin-binding protein. Interacts with the helicase primase complex; this interaction stimulates primer synthesis activity of the helicase-primase complex. Interacts with the DNA polymerase. Interacts with the alkaline exonuclease; this interaction increases its nuclease processivity.

It is found in the host nucleus. Functionally, plays several crucial roles in viral infection. Participates in the opening of the viral DNA origin to initiate replication by interacting with the origin-binding protein. May disrupt loops, hairpins and other secondary structures present on ssDNA to reduce and eliminate pausing of viral DNA polymerase at specific sites during elongation. Promotes viral DNA recombination by performing strand-transfer, characterized by the ability to transfer a DNA strand from a linear duplex to a complementary single-stranded DNA circle. Can also catalyze the renaturation of complementary single strands. Additionally, reorganizes the host cell nucleus, leading to the formation of prereplicative sites and replication compartments. This process is driven by the protein which can form double-helical filaments in the absence of DNA. In Homo sapiens (Human), this protein is Major DNA-binding protein.